The chain runs to 92 residues: Conotoxin Im9.4 (92 aa).

A signal peptide spans 1–20 (MHRSLAGSAVLMLLLLFALG). A propeptide spanning residues 21–62 (NFVGVQPGLVTRDADNGQLMDNRRNLRLERKTMSLFKSLDKR) is cleaved from the precursor. 3 disulfides stabilise this stretch: Cys65/Cys79, Cys69/Cys81, and Cys75/Cys87. At Asn90 the chain carries Asparagine amide.

This sequence belongs to the conotoxin P superfamily. In terms of tissue distribution, expressed by the venom duct.

Its subcellular location is the secreted. Probable neurotoxin that inhibits ion channels. The polypeptide is Conotoxin Im9.4 (Conus imperialis (Imperial cone)).